We begin with the raw amino-acid sequence, 148 residues long: UPF0756 membrane protein CKO_01811 (148 aa).

Transmembrane regions (helical) follow at residues 14–34 (ALGF…LIIV), 51–71 (LTVG…SGSL), 86–106 (LVAI…VTLM), and 121–141 (VLGV…AGLV).

Belongs to the UPF0756 family.

It is found in the cell membrane. This Citrobacter koseri (strain ATCC BAA-895 / CDC 4225-83 / SGSC4696) protein is UPF0756 membrane protein CKO_01811.